Here is a 380-residue protein sequence, read N- to C-terminus: Cytochrome b (380 aa).

Helical transmembrane passes span 34-54 (FGSL…LLAM), 78-99 (WLIR…FLHI), 114-134 (WNTG…GYVL), and 179-199 (FFAL…IHLT). H84 and H98 together coordinate heme b. 2 residues coordinate heme b: H183 and H197. Residue H202 participates in a ubiquinone binding. 4 helical membrane passes run 227 to 247 (IKDI…ALFS), 289 to 309 (LGGV…PFLH), 321 to 341 (LSQT…WIGS), and 348 to 368 (FIII…ILFP).

It belongs to the cytochrome b family. As to quaternary structure, the cytochrome bc1 complex contains 11 subunits: 3 respiratory subunits (MT-CYB, CYC1 and UQCRFS1), 2 core proteins (UQCRC1 and UQCRC2) and 6 low-molecular weight proteins (UQCRH/QCR6, UQCRB/QCR7, UQCRQ/QCR8, UQCR10/QCR9, UQCR11/QCR10 and a cleavage product of UQCRFS1). This cytochrome bc1 complex then forms a dimer. Heme b serves as cofactor.

Its subcellular location is the mitochondrion inner membrane. In terms of biological role, component of the ubiquinol-cytochrome c reductase complex (complex III or cytochrome b-c1 complex) that is part of the mitochondrial respiratory chain. The b-c1 complex mediates electron transfer from ubiquinol to cytochrome c. Contributes to the generation of a proton gradient across the mitochondrial membrane that is then used for ATP synthesis. The polypeptide is Cytochrome b (MT-CYB) (Alectoris chukar (Chukar partridge)).